Consider the following 390-residue polypeptide: MKLSTALVLGATATGAWSYAIPQLEQEVLELPETHYEQQEKYLIELSPYQTRWVTEEEKWALKLDGVNFIDITEDRNYGLFPTLDAGSYVNYPQKMGYVDTVKGLIAGLSMDNMRKDLENFTSFHTRYYKSSSGVESAQWLYDQVSKVVRDSGADKFGATVQKFDHSWGQFSIIARIPGLSKKTVVLGAHQDSINLFLPSFLGAPGADDDGSGTVTILEALRGLLKSDIVAHGQSPNTIEFHWYSAEEGGMLGSQAIFSKYKKNQADVKAMLQQDMTGYVQGTKHAGQKESIGVMTDFVDPALTSFLKNTIVTYCAIPFVETKCGYACSDHTSASKYGYPSAMATESTMENSNKHIHTTDDKISYLSFDHMLEHAKLTLGFAYELAFAAL.

The first 18 residues, 1–18, serve as a signal peptide directing secretion; that stretch reads MKLSTALVLGATATGAWS. Positions 19–90 are excised as a propeptide; that stretch reads YAIPQLEQEV…FPTLDAGSYV (72 aa). Residue N120 is glycosylated (N-linked (GlcNAc...) asparagine). Zn(2+) is bound by residues H190, D209, E248, and D275. C324 and C328 are disulfide-bonded. A Zn(2+)-binding site is contributed by H357.

It belongs to the peptidase M28 family. M28E subfamily. Monomer. Zn(2+) serves as cofactor.

The protein resides in the secreted. Functionally, extracellular aminopeptidase that allows assimilation of proteinaceous substrates. The chain is Leucine aminopeptidase 1 (lap1) from Emericella nidulans (strain FGSC A4 / ATCC 38163 / CBS 112.46 / NRRL 194 / M139) (Aspergillus nidulans).